Reading from the N-terminus, the 893-residue chain is ATPase family gene 2 protein homolog A (893 aa).

The segment covering 1–10 (MSSKKNRKRL) has biased composition (basic residues). The interval 1 to 26 (MSSKKNRKRLNQSAENGSSLPSAASS) is disordered. Residues 1 to 237 (MSSKKNRKRL…SLELSLQLSQ (237 aa)) form a required for interaction with AFG2B and CINP region. The segment covering 11 to 25 (NQSAENGSSLPSAAS) has biased composition (polar residues). Thr272 is modified (phosphothreonine). Residues Ser274 and Ser279 each carry the phosphoserine modification. ATP-binding positions include 394–401 (GPPGTGKT) and 668–675 (GPPGCSKT). A Glycyl lysine isopeptide (Lys-Gly) (interchain with G-Cter in SUMO2) cross-link involves residue Lys859.

It belongs to the AAA ATPase family. AFG2 subfamily. Part of the 55LCC heterohexameric ATPase complex composed at least of AIRIM, AFG2A, AFG2B and CINP. Associates with pre-60S ribosomal particles.

Its subcellular location is the cytoplasm. It localises to the mitochondrion. It is found in the cytoskeleton. The protein resides in the spindle. The enzyme catalyses ATP + H2O = ADP + phosphate + H(+). AFG2A alone display limited ATPase activity and is not regulated by RNA or DNA binding. In the context of 55LCC heterohexameric ATPase complex, the ATPase activity increases and is stimulated by DNA binding and inhibited in presence of RNA. Its function is as follows. ATP-dependent chaperone part of the 55LCC heterohexameric ATPase complex which is chromatin-associated and promotes replisome proteostasis to maintain replication fork progression and genome stability. Required for replication fork progression, sister chromatid cohesion, and chromosome stability. The ATPase activity is specifically enhanced by replication fork DNA and is coupled to cysteine protease-dependent cleavage of replisome substrates in response to replication fork damage. Uses ATPase activity to process replisome substrates in S-phase, facilitating their proteolytic turnover from chromatin to ensure DNA replication and mitotic fidelity. Plays an essential role in the cytoplasmic maturation steps of pre-60S ribosomal particles by promoting the release of shuttling protein RSL24D1/RLP24 from the pre-ribosomal particles. May be involved in morphological and functional mitochondrial transformations during spermatogenesis. The polypeptide is ATPase family gene 2 protein homolog A (Homo sapiens (Human)).